Here is a 368-residue protein sequence, read N- to C-terminus: Phosphoribosylformylglycinamidine cyclo-ligase (368 aa).

It belongs to the AIR synthase family.

Its subcellular location is the cytoplasm. The catalysed reaction is 2-formamido-N(1)-(5-O-phospho-beta-D-ribosyl)acetamidine + ATP = 5-amino-1-(5-phospho-beta-D-ribosyl)imidazole + ADP + phosphate + H(+). It participates in purine metabolism; IMP biosynthesis via de novo pathway; 5-amino-1-(5-phospho-D-ribosyl)imidazole from N(2)-formyl-N(1)-(5-phospho-D-ribosyl)glycinamide: step 2/2. This is Phosphoribosylformylglycinamidine cyclo-ligase from Chelativorans sp. (strain BNC1).